The chain runs to 617 residues: Acetolactate synthase large subunit (617 aa).

Glutamate 71 lines the thiamine diphosphate pocket. FAD is bound by residues arginine 173, 281–302 (HGTA…VGAR), and 324–343 (EIDP…VLGD). The thiamine pyrophosphate binding stretch occupies residues 413–492 (QHQMWAAQHL…VKVVIVNNHW (80 aa)). Mg(2+) is bound by residues aspartate 463 and asparagine 490.

The protein belongs to the TPP enzyme family. As to quaternary structure, dimer of large and small chains. The cofactor is Mg(2+). Thiamine diphosphate serves as cofactor.

The enzyme catalyses 2 pyruvate + H(+) = (2S)-2-acetolactate + CO2. It functions in the pathway amino-acid biosynthesis; L-isoleucine biosynthesis; L-isoleucine from 2-oxobutanoate: step 1/4. Its pathway is amino-acid biosynthesis; L-valine biosynthesis; L-valine from pyruvate: step 1/4. The chain is Acetolactate synthase large subunit (ilvB) from Parasynechococcus marenigrum (strain WH8102).